The primary structure comprises 316 residues: Retinol dehydrogenase 11 (316 aa).

Residues 1–21 (MFGFLLLLSLPFILYLVTPKI) form a helical; Signal-anchor for type II membrane protein membrane-spanning segment. Residues 22-316 (RKMLSSGVCT…CDLLGLPVDW (295 aa)) are Cytoplasmic-facing. 45–51 (GANTGIG) lines the NADP(+) pocket. Position 109 is an N6-acetyllysine (K109). A substrate-binding site is contributed by S174. Y199 (proton acceptor) is an active-site residue.

The protein belongs to the short-chain dehydrogenases/reductases (SDR) family. In terms of processing, not glycosylated. Expressed at high level in liver and testis. Expressed at lower levels in smooth muscle, thymus, submaxillary gland and epididymis. In testis, expression is restricted to pachytene spermatocytes. Also expressed in four layers of the retina, including the outer segment of rods and cones.

It is found in the endoplasmic reticulum membrane. It carries out the reaction all-trans-retinol + NADP(+) = all-trans-retinal + NADPH + H(+). It catalyses the reaction 11-cis-retinol + NADP(+) = 11-cis-retinal + NADPH + H(+). The enzyme catalyses 9-cis-retinol + NADP(+) = 9-cis-retinal + NADPH + H(+). The catalysed reaction is 13-cis-retinol + NADP(+) = 13-cis-retinal + NADPH + H(+). It carries out the reaction a medium-chain primary fatty alcohol + NADP(+) = a medium-chain fatty aldehyde + NADPH + H(+). It catalyses the reaction (2E,6Z)-nona-2,6-dien-1-ol + NADP(+) = (2E,6Z)-nona-2,6-dienal + NADPH + H(+). The enzyme catalyses (E)-oct-2-en-1-ol + NADP(+) = (2E)-octenal + NADPH + H(+). The catalysed reaction is (E)-non-2-en-1-ol + NADP(+) = (E)-non-2-enal + NADPH + H(+). It carries out the reaction heptan-1-ol + NADP(+) = heptanal + NADPH + H(+). It catalyses the reaction hexan-1-ol + NADP(+) = hexanal + NADPH + H(+). The enzyme catalyses decan-1-ol + NADP(+) = decanal + NADPH + H(+). The catalysed reaction is nonan-1-ol + NADP(+) = nonanal + NADPH + H(+). It carries out the reaction octan-1-ol + NADP(+) = octanal + NADPH + H(+). It catalyses the reaction (Z)-non-6-en-1-ol + NADP(+) = (Z)-non-6-enal + NADPH + H(+). It participates in cofactor metabolism; retinol metabolism. Functionally, retinol dehydrogenase with a clear preference for NADP. Displays high activity towards 9-cis, 11-cis and all-trans-retinol, and to a lesser extent on 13-cis-retinol. Also exhibits reductive activity towards toxic lipid peroxidation products such as medium-chain aldehydes trans-2-nonenal, nonanal, and cis-6-nonenal. Has no dehydrogenase activity towards steroid. Seems to be required for homeostasis of retinol in liver and testis. This Mus musculus (Mouse) protein is Retinol dehydrogenase 11 (Rdh11).